The following is a 144-amino-acid chain: Large ribosomal subunit protein uL11 (144 aa).

It belongs to the universal ribosomal protein uL11 family. As to quaternary structure, part of the ribosomal stalk of the 50S ribosomal subunit. Interacts with L10 and the large rRNA to form the base of the stalk. L10 forms an elongated spine to which L12 dimers bind in a sequential fashion forming a multimeric L10(L12)X complex. In terms of processing, one or more lysine residues are methylated.

Forms part of the ribosomal stalk which helps the ribosome interact with GTP-bound translation factors. This chain is Large ribosomal subunit protein uL11, found in Neisseria meningitidis serogroup A / serotype 4A (strain DSM 15465 / Z2491).